Reading from the N-terminus, the 83-residue chain is Mu-theraphotoxin-Hhn2b 1 (83 aa).

Residues 1–21 form the signal peptide; the sequence is MKASMFLALAGLVLLFVVCYA. The propeptide occupies 22 to 48; it reads SESEEKEFPRELISKIFAVDDFKGEER. Disulfide bonds link C50–C65, C57–C70, and C64–C77. The residue at position 81 (L81) is a Leucine amide.

It belongs to the neurotoxin 10 (Hwtx-1) family. 14 (Hntx-1) subfamily. As to quaternary structure, monomer. Expressed by the venom gland.

Its subcellular location is the secreted. Its function is as follows. Weakly blocks the rat SCN2A/SCN1B (Nav1.2/beta-1) sodium channel (IC(50)=68 uM) and the insect sodium channel para/tipE (IC(50)=4.3 uM), without altering the activation or inactivation kinetics (depressant toxin). The chain is Mu-theraphotoxin-Hhn2b 1 from Cyriopagopus hainanus (Chinese bird spider).